The chain runs to 648 residues: PAN2-PAN3 deadenylation complex subunit PAN3 (648 aa).

The disordered stretch occupies residues Met-1–Glu-24. The C3H1-type zinc finger occupies Glu-24–Asn-53. The interval Gln-244 to Ala-506 is pseudokinase domain. ATP contacts are provided by residues Arg-295, Asp-345 to Thr-352, and Ser-404 to Lys-405. The stretch at Thr-507–Thr-545 forms a coiled coil. Residues Ile-546–Asn-648 form a knob domain region.

The protein belongs to the protein kinase superfamily. PAN3 family. Homodimer. Forms a heterotrimer with a catalytic subunit PAN2 to form the poly(A)-nuclease (PAN) deadenylation complex. Interacts (via PAM-2 motif) with poly(A)-binding protein PAB1 (via PABC domain), conferring substrate specificity of the enzyme complex.

The protein resides in the cytoplasm. In terms of biological role, regulatory subunit of the poly(A)-nuclease (PAN) deadenylation complex, one of two cytoplasmic mRNA deadenylases involved in mRNA turnover. PAN specifically shortens poly(A) tails of RNA and the activity is stimulated by poly(A)-binding protein PAB1. PAN deadenylation is followed by rapid degradation of the shortened mRNA tails by the CCR4-NOT complex. Deadenylated mRNAs are then degraded by two alternative mechanisms, namely exosome-mediated 3'-5' exonucleolytic degradation, or deadenylation-dependent mRNA decaping and subsequent 5'-3' exonucleolytic degradation by XRN1. May also be involved in post-transcriptional maturation of mRNA poly(A) tails. PAN3 acts as a positive regulator for PAN activity, recruiting the catalytic subunit PAN2 to mRNA via its interaction with RNA and with PAB1. This Chaetomium globosum (strain ATCC 6205 / CBS 148.51 / DSM 1962 / NBRC 6347 / NRRL 1970) (Soil fungus) protein is PAN2-PAN3 deadenylation complex subunit PAN3.